Reading from the N-terminus, the 420-residue chain is Putative competence-damage inducible protein (420 aa).

The protein belongs to the CinA family.

The sequence is that of Putative competence-damage inducible protein from Halalkalibacterium halodurans (strain ATCC BAA-125 / DSM 18197 / FERM 7344 / JCM 9153 / C-125) (Bacillus halodurans).